We begin with the raw amino-acid sequence, 96 residues long: Co-chaperonin GroES (96 aa).

This sequence belongs to the GroES chaperonin family. Heptamer of 7 subunits arranged in a ring. Interacts with the chaperonin GroEL.

The protein localises to the cytoplasm. In terms of biological role, together with the chaperonin GroEL, plays an essential role in assisting protein folding. The GroEL-GroES system forms a nano-cage that allows encapsulation of the non-native substrate proteins and provides a physical environment optimized to promote and accelerate protein folding. GroES binds to the apical surface of the GroEL ring, thereby capping the opening of the GroEL channel. The sequence is that of Co-chaperonin GroES from Shewanella halifaxensis (strain HAW-EB4).